Here is a 150-residue protein sequence, read N- to C-terminus: Nucleoside diphosphate kinase (150 aa).

ATP-binding residues include K9, F57, R85, T91, R102, and N112. H115 (pros-phosphohistidine intermediate) is an active-site residue.

The protein belongs to the NDK family. Mg(2+) is required as a cofactor.

The protein localises to the cytoplasm. It carries out the reaction a 2'-deoxyribonucleoside 5'-diphosphate + ATP = a 2'-deoxyribonucleoside 5'-triphosphate + ADP. The enzyme catalyses a ribonucleoside 5'-diphosphate + ATP = a ribonucleoside 5'-triphosphate + ADP. Major role in the synthesis of nucleoside triphosphates other than ATP. The ATP gamma phosphate is transferred to the NDP beta phosphate via a ping-pong mechanism, using a phosphorylated active-site intermediate. This is Nucleoside diphosphate kinase from Methanoregula boonei (strain DSM 21154 / JCM 14090 / 6A8).